The following is a 71-amino-acid chain: Small ribosomal subunit protein bS21 (71 aa).

Belongs to the bacterial ribosomal protein bS21 family.

The polypeptide is Small ribosomal subunit protein bS21 (Pseudoalteromonas atlantica (strain T6c / ATCC BAA-1087)).